The sequence spans 216 residues: Cytidylate kinase (216 aa).

Position 7–15 (7–15 (GPAGTGKST)) interacts with ATP.

It belongs to the cytidylate kinase family. Type 1 subfamily.

The protein resides in the cytoplasm. It carries out the reaction CMP + ATP = CDP + ADP. The enzyme catalyses dCMP + ATP = dCDP + ADP. The chain is Cytidylate kinase from Chlamydia muridarum (strain MoPn / Nigg).